The following is a 648-amino-acid chain: Macrolide export ATP-binding/permease protein MacB (648 aa).

The ABC transporter domain maps to L5–T243. G41 to S48 lines the ATP pocket. 4 consecutive transmembrane segments (helical) span residues L273–G293, L523–I543, A576–F596, and P611–L631.

The protein belongs to the ABC transporter superfamily. Macrolide exporter (TC 3.A.1.122) family. As to quaternary structure, homodimer. Part of the tripartite efflux system MacAB-TolC, which is composed of an inner membrane transporter, MacB, a periplasmic membrane fusion protein, MacA, and an outer membrane component, TolC. The complex forms a large protein conduit and can translocate molecules across both the inner and outer membranes. Interacts with MacA.

Its subcellular location is the cell inner membrane. Part of the tripartite efflux system MacAB-TolC. MacB is a non-canonical ABC transporter that contains transmembrane domains (TMD), which form a pore in the inner membrane, and an ATP-binding domain (NBD), which is responsible for energy generation. Confers resistance against macrolides. The chain is Macrolide export ATP-binding/permease protein MacB from Escherichia coli O157:H7.